Here is a 392-residue protein sequence, read N- to C-terminus: Chalcone synthase 1 (392 aa).

Cys-167 is a catalytic residue.

This sequence belongs to the thiolase-like superfamily. Chalcone/stilbene synthases family.

It catalyses the reaction (E)-4-coumaroyl-CoA + 3 malonyl-CoA + 3 H(+) = 2',4,4',6'-tetrahydroxychalcone + 3 CO2 + 4 CoA. It functions in the pathway secondary metabolite biosynthesis; flavonoid biosynthesis. The primary product of this enzyme is 4,2',4',6'-tetrahydroxychalcone (also termed naringenin-chalcone or chalcone) which can under specific conditions spontaneously isomerize into naringenin. The polypeptide is Chalcone synthase 1 (CHS1) (Secale cereale (Rye)).